The chain runs to 1110 residues: ATP-dependent DNA helicase MPH1 (1110 aa).

Polar residues predominate over residues 24–34; it reads LNEVSDSQTGR. Disordered stretches follow at residues 24–165, 178–212, and 236–305; these read LNEV…TNGK, FEEE…PVTN, and TETA…PTHH. 2 stretches are compositionally biased toward basic and acidic residues: residues 42–57 and 178–188; these read NSHE…REIE and FEEEQSARGDA. Residues 189 to 199 are compositionally biased toward acidic residues; it reads EMLDDSIEEPG. Polar residues-rich tracts occupy residues 246–273 and 287–300; these read ISSQ…QTTL and QPAT…SRNE. The region spanning 331–499 is the Helicase ATP-binding domain; it reads IAHRALFHNL…EVIDGLSISR (169 aa). ATP is bound at residue 344–351; the sequence is LPTGLGKT. The short motif at 447 to 450 is the DEAH box element; that stretch reads DEAH. One can recognise a Helicase C-terminal domain in the interval 675-846; the sequence is ILNHFLDAGG…RFTFHTDKSS (172 aa). Disordered stretches follow at residues 867 to 937, 1013 to 1055, and 1069 to 1110; these read ENSQ…PDLG, VGDP…RCGT, and NLAW…DVFE. Over residues 879–890 the composition is skewed to basic residues; that stretch reads RSRAPKRPPKKF. Basic and acidic residues-rich tracts occupy residues 891–900, 1041–1055, and 1077–1093; these read HMPDGVEKGF, QSRE…RCGT, and EAPR…DQKP.

It belongs to the DEAD box helicase family. DEAH subfamily. FANCM sub-subfamily. As to quaternary structure, interacts with the MHF histone-fold complex to form the FANCM-MHF complex.

It is found in the nucleus. It catalyses the reaction ATP + H2O = ADP + phosphate + H(+). Its function is as follows. ATP-dependent DNA helicase involved in DNA damage repair by homologous recombination and in genome maintenance. Capable of unwinding D-loops. Plays a role in limiting crossover recombinants during mitotic DNA double-strand break (DSB) repair. Component of a FANCM-MHF complex which promotes gene conversion at blocked replication forks, probably by reversal of the stalled fork. This Coccidioides immitis (strain RS) (Valley fever fungus) protein is ATP-dependent DNA helicase MPH1.